Reading from the N-terminus, the 677-residue chain is UvrABC system protein B (677 aa).

The region spanning Glu-24–Arg-412 is the Helicase ATP-binding domain. Residue Gly-37–Thr-44 coordinates ATP. A Beta-hairpin motif is present at residues Tyr-90–Ile-113. The Helicase C-terminal domain occupies Gln-429–Arg-591. Residues Glu-636–Leu-671 form the UVR domain.

It belongs to the UvrB family. In terms of assembly, forms a heterotetramer with UvrA during the search for lesions. Interacts with UvrC in an incision complex.

It is found in the cytoplasm. In terms of biological role, the UvrABC repair system catalyzes the recognition and processing of DNA lesions. A damage recognition complex composed of 2 UvrA and 2 UvrB subunits scans DNA for abnormalities. Upon binding of the UvrA(2)B(2) complex to a putative damaged site, the DNA wraps around one UvrB monomer. DNA wrap is dependent on ATP binding by UvrB and probably causes local melting of the DNA helix, facilitating insertion of UvrB beta-hairpin between the DNA strands. Then UvrB probes one DNA strand for the presence of a lesion. If a lesion is found the UvrA subunits dissociate and the UvrB-DNA preincision complex is formed. This complex is subsequently bound by UvrC and the second UvrB is released. If no lesion is found, the DNA wraps around the other UvrB subunit that will check the other stand for damage. This Bacteroides thetaiotaomicron (strain ATCC 29148 / DSM 2079 / JCM 5827 / CCUG 10774 / NCTC 10582 / VPI-5482 / E50) protein is UvrABC system protein B.